We begin with the raw amino-acid sequence, 360 residues long: Tryptophan--tRNA ligase, mitochondrial (360 aa).

The N-terminal 18 residues, 1–18 (MALHSMRKARERWSFIRA), are a transit peptide targeting the mitochondrion. ATP-binding positions include glutamine 42 and 48–51 (HLGN). Aspartate 167 lines the L-tryptophan pocket. ATP is bound by residues 179 to 181 (GED), valine 217, and 226 to 230 (KMSKS).

This sequence belongs to the class-I aminoacyl-tRNA synthetase family. As to expression, brain.

It is found in the mitochondrion matrix. The protein resides in the mitochondrion. The enzyme catalyses tRNA(Trp) + L-tryptophan + ATP = L-tryptophyl-tRNA(Trp) + AMP + diphosphate + H(+). In terms of biological role, catalyzes the attachment of tryptophan to tRNA(Trp) in a two-step reaction: tryptophan is first activated by ATP to form Trp-AMP and then transferred to the acceptor end of tRNA(Trp). This Homo sapiens (Human) protein is Tryptophan--tRNA ligase, mitochondrial (WARS2).